A 169-amino-acid polypeptide reads, in one-letter code: Peptide deformylase 1 (169 aa).

2 residues coordinate Fe cation: Cys91 and His133. Glu134 is a catalytic residue. Residue His137 participates in Fe cation binding.

It belongs to the polypeptide deformylase family. Fe(2+) is required as a cofactor.

The catalysed reaction is N-terminal N-formyl-L-methionyl-[peptide] + H2O = N-terminal L-methionyl-[peptide] + formate. Its function is as follows. Removes the formyl group from the N-terminal Met of newly synthesized proteins. Requires at least a dipeptide for an efficient rate of reaction. N-terminal L-methionine is a prerequisite for activity but the enzyme has broad specificity at other positions. The chain is Peptide deformylase 1 from Vibrio cholerae serotype O1 (strain ATCC 39315 / El Tor Inaba N16961).